The chain runs to 1090 residues: UPF0507 protein SCRG_01893 (1090 aa).

The region spanning 289–436 (FSVNQLLTDF…FEDFNKNTGN (148 aa)) is the VPS9 domain.

The protein belongs to the UPF0507 family.

The chain is UPF0507 protein SCRG_01893 from Saccharomyces cerevisiae (strain RM11-1a) (Baker's yeast).